A 430-amino-acid polypeptide reads, in one-letter code: Trigger factor (430 aa).

Residues 163 to 248 (GDTVVFDFAG…IHEIKAQELP (86 aa)) enclose the PPIase FKBP-type domain.

It belongs to the FKBP-type PPIase family. Tig subfamily.

The protein localises to the cytoplasm. The catalysed reaction is [protein]-peptidylproline (omega=180) = [protein]-peptidylproline (omega=0). Functionally, involved in protein export. Acts as a chaperone by maintaining the newly synthesized protein in an open conformation. Functions as a peptidyl-prolyl cis-trans isomerase. In Exiguobacterium sibiricum (strain DSM 17290 / CCUG 55495 / CIP 109462 / JCM 13490 / 255-15), this protein is Trigger factor.